Here is a 731-residue protein sequence, read N- to C-terminus: SUN domain-containing protein 2 (731 aa).

Disordered regions lie at residues 1-69 and 106-142; these read MSRR…SHTS and SGDLRGRRRRGTGGSESSKANGLTAESKASEDFFGSS. The LMNA-binding stretch occupies residues 1–128; that stretch reads MSRRSQRLTR…GSESSKANGL (128 aa). Topologically, residues 1–226 are nuclear; it reads MSRRSQRLTR…SRHFSLNLKS (226 aa). Ser-12 is modified (phosphoserine). A compositionally biased stretch (low complexity) spans 18–33; sequence GGSSSSGASSVAGSQG. Residues Ser-39 and Ser-55 each carry the phosphoserine modification. Thr-117 carries the post-translational modification Phosphothreonine. Ser-120, Ser-123, and Ser-147 each carry phosphoserine. Residues 227 to 247 form a helical membrane-spanning segment; it reads FLWFLLLLLLLTGLTYGAWHF. At 248–731 the chain is on the perinuclear space side; sequence YPLGLQTLQP…RFRVHGEPAH (484 aa). 2 coiled-coil regions span residues 396-452 and 486-519; these read QESE…VADE and RSGLLQRDEMHAQLQELENKILTKMAEMQGKSAR. Residues 521 to 731 form a sufficient for interaction with SYNE1 and SYNE2 region; that stretch reads AAASLGQILQ…RFRVHGEPAH (211 aa). One can recognise an SUN domain in the interval 569 to 730; it reads GASVISTRCS…YRFRVHGEPA (162 aa). Asn-650 carries an N-linked (GlcNAc...) asparagine glycan.

As to quaternary structure, core component of the LINC complex which is composed of inner nuclear membrane SUN domain-containing proteins coupled to outer nuclear membrane KASH domain-containing nesprins. SUN and KASH domain-containing proteins seem to bind each other promiscuously; however, differentially expression of LINC complex constituents is giving rise to specific assemblies. At least SUN1/2-containing core LINC complexes are proposed to be hexameric composed of three protomers of each KASH and SUN domain-containing protein. Interacts with SYNE2; the SUN2:SYNE2/KASH2 LINC complex is a heterohexamer; the homotrimeric cloverleave-like conformation of the SUN domain is a prerequisite for LINC complex formation in which three separate SYNE2/KASH2 peptides bind at the interface of adjacent SUN domains. Component of a probable SUN2:KASH5 LINC complex. Interacts with SYNE1 and SYNE3; probably forming respective LINC complexes. Interacts with A-type lamin. Interaction with lamins B1 and C is hardly detectable. Interacts with EMD. Interacts with RAB5A. Interacts with TMEM43 and TMEM201. Interacts with IRAG2. In terms of processing, the disulfide bond with SYNE2 is required for stability of the SUN2:SYNE2/KASH2 LINC complex under tensile forces though not required for the interaction. The disulfide bond is proposed to be conserved in LINC complexes involved in force transmission. Highly expressed in heart, placenta and muscle.

It is found in the nucleus inner membrane. Its subcellular location is the nucleus envelope. It localises to the endosome membrane. Its function is as follows. As a component of the LINC (LInker of Nucleoskeleton and Cytoskeleton) complex, involved in the connection between the nuclear lamina and the cytoskeleton. The nucleocytoplasmic interactions established by the LINC complex play an important role in the transmission of mechanical forces across the nuclear envelope and in nuclear movement and positioning. Specifically, SYNE2 and SUN2 assemble in arrays of transmembrane actin-associated nuclear (TAN) lines which are bound to F-actin cables and couple the nucleus to retrograde actin flow during actin-dependent nuclear movement. Required for interkinetic nuclear migration (INM) and essential for nucleokinesis and centrosome-nucleus coupling during radial neuronal migration in the cerebral cortex and during glial migration. Required for nuclear migration in retinal photoreceptor progenitors implicating association with cytoplasmic dynein-dynactin and kinesin motor complexes, and probably B-type lamins; SUN1 and SUN2 seem to act redundantly. The SUN1/2:KASH5 LINC complex couples telomeres to microtubules during meiosis; SUN1 and SUN2 seem to act at least partial redundantly. Anchors chromosome movement in the prophase of meiosis and is involved in selective gene expression of coding and non-coding RNAs needed for gametogenesis. Required for telomere attachment to nuclear envelope and gametogenesis. May also function on endocytic vesicles as a receptor for Rab5-GDP and participate in the activation of Rab5. In Mus musculus (Mouse), this protein is SUN domain-containing protein 2.